We begin with the raw amino-acid sequence, 330 residues long: Geranylgeranyl diphosphate synthase (330 aa).

Isopentenyl diphosphate contacts are provided by Lys-43, Arg-46, and His-75. Mg(2+)-binding residues include Asp-82 and Asp-86. Arg-91 is a binding site for an all-trans-polyprenyl diphosphate. Isopentenyl diphosphate is bound at residue Arg-92. An all-trans-polyprenyl diphosphate contacts are provided by Lys-175, Thr-176, Gln-213, Lys-230, and Lys-240.

The protein belongs to the FPP/GGPP synthase family. The cofactor is Mg(2+).

The catalysed reaction is isopentenyl diphosphate + (2E,6E)-farnesyl diphosphate = (2E,6E,10E)-geranylgeranyl diphosphate + diphosphate. It functions in the pathway isoprenoid biosynthesis; geranylgeranyl diphosphate biosynthesis; geranylgeranyl diphosphate from farnesyl diphosphate and isopentenyl diphosphate: step 1/1. Its function is as follows. Catalyzes the condensation of isopentenyl pyrophosphate with the allylic pyrophosphates to yield geranylgeranyl diphosphate (GGPP) which is a precursor of the ether-linked lipids. It is able to use dimethylallyl diphosphate (DMAPP), geranyl diphosphate (GPP), and (all-E)-geranyl diphosphate (E-FPP) as an allylic substrate. The chain is Geranylgeranyl diphosphate synthase (gds) from Sulfolobus acidocaldarius (strain ATCC 33909 / DSM 639 / JCM 8929 / NBRC 15157 / NCIMB 11770).